The sequence spans 125 residues: Small ribosomal subunit protein uS12 (125 aa).

Aspartate 89 is subject to 3-methylthioaspartic acid.

It belongs to the universal ribosomal protein uS12 family. Part of the 30S ribosomal subunit. Contacts proteins S8 and S17. May interact with IF1 in the 30S initiation complex.

Its function is as follows. With S4 and S5 plays an important role in translational accuracy. Interacts with and stabilizes bases of the 16S rRNA that are involved in tRNA selection in the A site and with the mRNA backbone. Located at the interface of the 30S and 50S subunits, it traverses the body of the 30S subunit contacting proteins on the other side and probably holding the rRNA structure together. The combined cluster of proteins S8, S12 and S17 appears to hold together the shoulder and platform of the 30S subunit. The chain is Small ribosomal subunit protein uS12 from Clostridium botulinum (strain ATCC 19397 / Type A).